The chain runs to 102 residues: UPF0235 protein Swol_0959 (102 aa).

It belongs to the UPF0235 family.

The sequence is that of UPF0235 protein Swol_0959 from Syntrophomonas wolfei subsp. wolfei (strain DSM 2245B / Goettingen).